Reading from the N-terminus, the 599-residue chain is Ecdysone oxidase (599 aa).

FAD is bound by residues 137–140 (NDMV) and 537–538 (WH). His-538 acts as the Proton acceptor in catalysis.

Belongs to the GMC oxidoreductase family. Requires FAD as cofactor.

It catalyses the reaction ecdysone + O2 = 3-dehydroecdysone + H2O2. In terms of biological role, involved in the inactivation of ecdysteroid molting hormones by converting ecdysteroids into 3-dehydroecdysteroids. This Spodoptera littoralis (Egyptian cotton leafworm) protein is Ecdysone oxidase.